The following is a 262-amino-acid chain: 3-methyl-2-oxobutanoate hydroxymethyltransferase (262 aa).

Mg(2+) contacts are provided by D42 and D81. Residues D42–S43, D81, and K110 each bind 3-methyl-2-oxobutanoate. Residue E112 participates in Mg(2+) binding. E180 functions as the Proton acceptor in the catalytic mechanism.

The protein belongs to the PanB family. Homodecamer; pentamer of dimers. Mg(2+) serves as cofactor.

It localises to the cytoplasm. The catalysed reaction is 3-methyl-2-oxobutanoate + (6R)-5,10-methylene-5,6,7,8-tetrahydrofolate + H2O = 2-dehydropantoate + (6S)-5,6,7,8-tetrahydrofolate. Its pathway is cofactor biosynthesis; (R)-pantothenate biosynthesis; (R)-pantoate from 3-methyl-2-oxobutanoate: step 1/2. Catalyzes the reversible reaction in which hydroxymethyl group from 5,10-methylenetetrahydrofolate is transferred onto alpha-ketoisovalerate to form ketopantoate. This is 3-methyl-2-oxobutanoate hydroxymethyltransferase from Legionella pneumophila (strain Paris).